We begin with the raw amino-acid sequence, 122 residues long: Cytochrome c-556 (122 aa).

Met-11, Cys-111, Cys-114, and His-115 together coordinate heme. Heme c is bound by residues Met-11, Cys-111, Cys-114, and His-115.

In terms of assembly, monomer. Binds 1 heme c group covalently per subunit.

In terms of biological role, low-spin monoheme cytochrome c. This Agrobacterium tumefaciens (strain II Chrys) protein is Cytochrome c-556.